The primary structure comprises 476 residues: Chromosomal replication initiator protein DnaA (476 aa).

Residues 1 to 87 (MSESSHVGLW…LMYNVLVDKS (87 aa)) form a domain I, interacts with DnaA modulators region. The domain II stretch occupies residues 87–130 (SSGATVNQESTTRSTAIPQSGLPRVDERKAPGLLRAPAVQDLDP). Residues 131 to 348 (HLNPNYNFET…GIVISIMAHS (218 aa)) form a domain III, AAA+ region region. ATP contacts are provided by Gly-176, Gly-178, Lys-179, and Thr-180. The domain IV, binds dsDNA stretch occupies residues 349 to 476 (TIYNKEIDLD…KKRNVSNGER (128 aa)).

It belongs to the DnaA family. In terms of assembly, oligomerizes as a right-handed, spiral filament on DNA at oriC.

It is found in the cytoplasm. In terms of biological role, plays an essential role in the initiation and regulation of chromosomal replication. ATP-DnaA binds to the origin of replication (oriC) to initiate formation of the DNA replication initiation complex once per cell cycle. Binds the DnaA box (a 9 base pair repeat at the origin) and separates the double-stranded (ds)DNA. Forms a right-handed helical filament on oriC DNA; dsDNA binds to the exterior of the filament while single-stranded (ss)DNA is stabiized in the filament's interior. The ATP-DnaA-oriC complex binds and stabilizes one strand of the AT-rich DNA unwinding element (DUE), permitting loading of DNA polymerase. After initiation quickly degrades to an ADP-DnaA complex that is not apt for DNA replication. Binds acidic phospholipids. The sequence is that of Chromosomal replication initiator protein DnaA from Bacteroides fragilis (strain YCH46).